Here is a 148-residue protein sequence, read N- to C-terminus: Small ribosomal subunit protein eS6 (148 aa).

It belongs to the eukaryotic ribosomal protein eS6 family.

The sequence is that of Small ribosomal subunit protein eS6 from Pyrobaculum arsenaticum (strain DSM 13514 / JCM 11321 / PZ6).